We begin with the raw amino-acid sequence, 87 residues long: Putative sodium channel toxin Ts38 (87 aa).

A signal peptide spans 1–22 (MKHLKFYSILFLFSIFVYKVNA). Disulfide bonds link cysteine 42–cysteine 65, cysteine 51–cysteine 72, and cysteine 55–cysteine 74.

It belongs to the long (3 C-C) scorpion toxin superfamily. Sodium channel inhibitor family. Expressed by the venom gland.

It is found in the secreted. Putative sodium channel toxin. The sequence is that of Putative sodium channel toxin Ts38 from Tityus serrulatus (Brazilian scorpion).